Reading from the N-terminus, the 289-residue chain is 4-diphosphocytidyl-2-C-methyl-D-erythritol kinase (289 aa).

The active site involves Lys13. 101–111 is a binding site for ATP; it reads PMGGGLGGGSS. The active site involves Asp143.

This sequence belongs to the GHMP kinase family. IspE subfamily.

The enzyme catalyses 4-CDP-2-C-methyl-D-erythritol + ATP = 4-CDP-2-C-methyl-D-erythritol 2-phosphate + ADP + H(+). Its pathway is isoprenoid biosynthesis; isopentenyl diphosphate biosynthesis via DXP pathway; isopentenyl diphosphate from 1-deoxy-D-xylulose 5-phosphate: step 3/6. Its function is as follows. Catalyzes the phosphorylation of the position 2 hydroxy group of 4-diphosphocytidyl-2C-methyl-D-erythritol. This chain is 4-diphosphocytidyl-2-C-methyl-D-erythritol kinase, found in Janthinobacterium sp. (strain Marseille) (Minibacterium massiliensis).